A 200-amino-acid chain; its full sequence is Recombination protein RecR (200 aa).

The C4-type zinc finger occupies 59–74 (CGTCGSLDVTDPCAVC). Residues 82–177 (RLLCVVEEVG…PVTMLARGVP (96 aa)) form the Toprim domain.

It belongs to the RecR family.

May play a role in DNA repair. It seems to be involved in an RecBC-independent recombinational process of DNA repair. It may act with RecF and RecO. The protein is Recombination protein RecR of Caulobacter vibrioides (strain ATCC 19089 / CIP 103742 / CB 15) (Caulobacter crescentus).